We begin with the raw amino-acid sequence, 190 residues long: NADH-quinone oxidoreductase subunit B (190 aa).

Residues Cys-39, Cys-40, Cys-104, and Cys-135 each coordinate [4Fe-4S] cluster.

It belongs to the complex I 20 kDa subunit family. As to quaternary structure, NDH-1 is composed of 14 different subunits. Subunits NuoB, C, D, E, F, and G constitute the peripheral sector of the complex. The cofactor is [4Fe-4S] cluster.

Its subcellular location is the cell inner membrane. The enzyme catalyses a quinone + NADH + 5 H(+)(in) = a quinol + NAD(+) + 4 H(+)(out). NDH-1 shuttles electrons from NADH, via FMN and iron-sulfur (Fe-S) centers, to quinones in the respiratory chain. The immediate electron acceptor for the enzyme in this species is believed to be a menaquinone. Couples the redox reaction to proton translocation (for every two electrons transferred, four hydrogen ions are translocated across the cytoplasmic membrane), and thus conserves the redox energy in a proton gradient. This is NADH-quinone oxidoreductase subunit B from Chlorobium phaeobacteroides (strain BS1).